A 175-amino-acid chain; its full sequence is MALNLRINRQIRAPRVRVIGSAGEQLGILSIKEALDLAKEANLDLVEVASNSEPPVCKIMDYGKYRYDVTKKEKDSKKAQHQVRIKEVKLKPNIDDNDFLTKAKQARAFIEKGNKVKVSCMFRGRELAYPEHGYKVIQRMCQGLEDIGFVESEPKLNGRSLICVIAPGTLKTKKK.

It belongs to the IF-3 family. As to quaternary structure, monomer.

The protein localises to the cytoplasm. In terms of biological role, IF-3 binds to the 30S ribosomal subunit and shifts the equilibrium between 70S ribosomes and their 50S and 30S subunits in favor of the free subunits, thus enhancing the availability of 30S subunits on which protein synthesis initiation begins. This is Translation initiation factor IF-3 from Chlamydia trachomatis serovar D (strain ATCC VR-885 / DSM 19411 / UW-3/Cx).